The chain runs to 61 residues: uncharacterized protein (61 aa).

The protein resides in the mitochondrion. This is an uncharacterized protein from Marchantia polymorpha (Common liverwort).